Reading from the N-terminus, the 550-residue chain is Dihydroxy-acid dehydratase (550 aa).

Mg(2+) is bound at residue Asp78. Cys119 is a binding site for [2Fe-2S] cluster. Mg(2+) contacts are provided by Asp120 and Lys121. Lys121 carries the post-translational modification N6-carboxylysine. [2Fe-2S] cluster is bound at residue Cys191. Glu440 provides a ligand contact to Mg(2+). The Proton acceptor role is filled by Ser466.

This sequence belongs to the IlvD/Edd family. In terms of assembly, homodimer. It depends on [2Fe-2S] cluster as a cofactor. The cofactor is Mg(2+).

It catalyses the reaction (2R)-2,3-dihydroxy-3-methylbutanoate = 3-methyl-2-oxobutanoate + H2O. It carries out the reaction (2R,3R)-2,3-dihydroxy-3-methylpentanoate = (S)-3-methyl-2-oxopentanoate + H2O. It functions in the pathway amino-acid biosynthesis; L-isoleucine biosynthesis; L-isoleucine from 2-oxobutanoate: step 3/4. It participates in amino-acid biosynthesis; L-valine biosynthesis; L-valine from pyruvate: step 3/4. Functions in the biosynthesis of branched-chain amino acids. Catalyzes the dehydration of (2R,3R)-2,3-dihydroxy-3-methylpentanoate (2,3-dihydroxy-3-methylvalerate) into 2-oxo-3-methylpentanoate (2-oxo-3-methylvalerate) and of (2R)-2,3-dihydroxy-3-methylbutanoate (2,3-dihydroxyisovalerate) into 2-oxo-3-methylbutanoate (2-oxoisovalerate), the penultimate precursor to L-isoleucine and L-valine, respectively. This Methanococcus vannielii (strain ATCC 35089 / DSM 1224 / JCM 13029 / OCM 148 / SB) protein is Dihydroxy-acid dehydratase.